The chain runs to 234 residues: Immune-associated nucleotide-binding protein 2 (234 aa).

An AIG1-type G domain is found at 21–223 (KPVKNIVLVG…YTEDMYRNIK (203 aa)). GTP contacts are provided by residues 30-38 (GRSVNGICT), Ser51, and Asn183.

It belongs to the TRAFAC class TrmE-Era-EngA-EngB-Septin-like GTPase superfamily. AIG1/Toc34/Toc159-like paraseptin GTPase family. IAN subfamily. In terms of tissue distribution, mostly expressed in pollen. Also detected in lateral roots and radicles.

The polypeptide is Immune-associated nucleotide-binding protein 2 (Arabidopsis thaliana (Mouse-ear cress)).